We begin with the raw amino-acid sequence, 262 residues long: Calbindin (262 aa).

Residue T2 is modified to N-acetylthreonine. 5 EF-hand domains span residues 12–47 (ISAA…LQQA), 54–89 (DLTP…EENF), 99–134 (KSSE…LLQK), 143–178 (KLTE…QENF), and 187–222 (MCAK…LCEK). Positions 25, 27, 29, 31, and 36 each coordinate Ca(2+). Ca(2+) is bound by residues D112, D114, S116, E123, D156, N158, D160, K162, E167, D200, D202, N204, Y206, and E211.

This sequence belongs to the calbindin family. As to expression, highly abundant in supporting cells. Also present in hair cells.

Functionally, buffers cytosolic calcium. May stimulate a membrane Ca(2+)-ATPase and a 3',5'-cyclic nucleotide phosphodiesterase. In Gallus gallus (Chicken), this protein is Calbindin (CALB1).